The sequence spans 590 residues: Aspartate--tRNA(Asp/Asn) ligase (590 aa).

Glutamate 175 contributes to the L-aspartate binding site. An aspartate region spans residues 199 to 202 (QQYK). Positions 221 and 450 each coordinate L-aspartate. Residue 221 to 223 (RDE) participates in ATP binding. Position 484 (glutamate 484) interacts with ATP. An L-aspartate-binding site is contributed by arginine 491. Position 536-539 (536-539 (GVDR)) interacts with ATP.

Belongs to the class-II aminoacyl-tRNA synthetase family. Type 1 subfamily. Homodimer.

Its subcellular location is the cytoplasm. It carries out the reaction tRNA(Asx) + L-aspartate + ATP = L-aspartyl-tRNA(Asx) + AMP + diphosphate. Aspartyl-tRNA synthetase with relaxed tRNA specificity since it is able to aspartylate not only its cognate tRNA(Asp) but also tRNA(Asn). Reaction proceeds in two steps: L-aspartate is first activated by ATP to form Asp-AMP and then transferred to the acceptor end of tRNA(Asp/Asn). The sequence is that of Aspartate--tRNA(Asp/Asn) ligase from Nitrobacter hamburgensis (strain DSM 10229 / NCIMB 13809 / X14).